The following is a 132-amino-acid chain: NADH-quinone oxidoreductase subunit I 1 (132 aa).

2 4Fe-4S ferredoxin-type domains span residues 42–71 and 81–110; these read LKVS…VEAG and ERYE…MTGQ. Residues cysteine 51, cysteine 54, cysteine 57, cysteine 61, cysteine 90, cysteine 93, cysteine 96, and cysteine 100 each contribute to the [4Fe-4S] cluster site.

The protein belongs to the complex I 23 kDa subunit family. NDH-1 is composed of 14 different subunits. Subunits NuoA, H, J, K, L, M, N constitute the membrane sector of the complex. Requires [4Fe-4S] cluster as cofactor.

It localises to the cell inner membrane. It catalyses the reaction a quinone + NADH + 5 H(+)(in) = a quinol + NAD(+) + 4 H(+)(out). In terms of biological role, NDH-1 shuttles electrons from NADH, via FMN and iron-sulfur (Fe-S) centers, to quinones in the respiratory chain. The immediate electron acceptor for the enzyme in this species is believed to be ubiquinone. Couples the redox reaction to proton translocation (for every two electrons transferred, four hydrogen ions are translocated across the cytoplasmic membrane), and thus conserves the redox energy in a proton gradient. In Geobacter sulfurreducens (strain ATCC 51573 / DSM 12127 / PCA), this protein is NADH-quinone oxidoreductase subunit I 1.